The following is a 98-amino-acid chain: ATP synthase subunit alpha, chloroplastic (98 aa).

This sequence belongs to the ATPase alpha/beta chains family. As to quaternary structure, F-type ATPases have 2 components, CF(1) - the catalytic core - and CF(0) - the membrane proton channel. CF(1) has five subunits: alpha(3), beta(3), gamma(1), delta(1), epsilon(1). CF(0) has four main subunits: a, b, b' and c.

The protein resides in the plastid. Its subcellular location is the chloroplast thylakoid membrane. It carries out the reaction ATP + H2O + 4 H(+)(in) = ADP + phosphate + 5 H(+)(out). In terms of biological role, produces ATP from ADP in the presence of a proton gradient across the membrane. The alpha chain is a regulatory subunit. This Populus euphratica (Euphrates poplar) protein is ATP synthase subunit alpha, chloroplastic (atpA).